Reading from the N-terminus, the 261-residue chain is Putative hydro-lyase VSAL_I1435 (261 aa).

Belongs to the D-glutamate cyclase family.

This chain is Putative hydro-lyase VSAL_I1435, found in Aliivibrio salmonicida (strain LFI1238) (Vibrio salmonicida (strain LFI1238)).